A 65-amino-acid chain; its full sequence is MPKLKSVRGAVKRFKKNSSGCFKHKQAYLRHLLTKKSTNRKRNLRFKSIVSKGDKNLVVRCLPYA.

It belongs to the bacterial ribosomal protein bL35 family.

The protein is Large ribosomal subunit protein bL35 of Baumannia cicadellinicola subsp. Homalodisca coagulata.